We begin with the raw amino-acid sequence, 37 residues long: Large ribosomal subunit protein bL36 (37 aa).

Belongs to the bacterial ribosomal protein bL36 family.

The sequence is that of Large ribosomal subunit protein bL36 from Koribacter versatilis (strain Ellin345).